The chain runs to 311 residues: Olfactory receptor 10D1B (311 aa).

At methionine 1–methionine 24 the chain is on the extracellular side. A helical transmembrane segment spans residues leucine 25 to leucine 45. Topologically, residues alanine 46 to histidine 54 are cytoplasmic. The helical transmembrane segment at threonine 55–serine 75 threads the bilayer. Topologically, residues serine 76–cysteine 95 are extracellular. The cysteines at positions 95 and 187 are disulfide-linked. A helical membrane pass occupies residues valine 96–methionine 116. Residues alanine 117–arginine 137 are Cytoplasmic-facing. Residues isoleucine 138–threonine 158 traverse the membrane as a helical segment. At threonine 159 to threonine 192 the chain is on the extracellular side. A helical transmembrane segment spans residues leucine 193–leucine 213. The Cytoplasmic segment spans residues threonine 214–serine 237. The helical transmembrane segment at threonine 238–leucine 258 threads the bilayer. At arginine 259–glutamine 271 the chain is on the extracellular side. The chain crosses the membrane as a helical span at residues isoleucine 272–leucine 288. Residues arginine 289–leucine 311 are Cytoplasmic-facing.

Belongs to the G-protein coupled receptor 1 family.

Its subcellular location is the cell membrane. Its function is as follows. Odorant receptor. The chain is Olfactory receptor 10D1B from Mus musculus (Mouse).